Here is a 131-residue protein sequence, read N- to C-terminus: MIVDTSAIVAIVSGESGAQVLKEALERSPNSRMSAPNYVELCAIMQRRDRPEISRLVDRLLDDYGIQVEAVDADQARVAAQAYRDYGRGSGHPARLNLGDTYSYALAQVTGEPLLFRGDDFTHTDIRPACT.

The 125-residue stretch at 1 to 125 folds into the PINc domain; sequence MIVDTSAIVA…FRGDDFTHTD (125 aa). Mg(2+) is bound by residues Asp-4 and Asp-100.

Belongs to the PINc/VapC protein family. Mg(2+) is required as a cofactor.

In terms of biological role, toxic component of a type II toxin-antitoxin (TA) system. An RNase. Its cognate antitoxin is VapB42. The sequence is that of Ribonuclease VapC42 from Mycobacterium tuberculosis (strain CDC 1551 / Oshkosh).